The chain runs to 472 residues: MTLDIPFDNTYAQLAPEFYTRQAPTPVKAPRLLAFNDALATLLGIARGTDAELAQVFGGNELPEGADPLAQLYAGHQFGTYNPQLGDGRAVLLGEVVGTDGLRRDIQLKGSGPTPYSRRGDGRAWLGPVLREYVVSEAMHALGIPTTRALAAVETGETVWREGGLPGAVLTRVASSHLRVGTFQIFAARGNTEALRSLTEYAIARHYPEAKGALGLLRAVRDAQVELVSAWMSVGFIHGVMNTDNSSIAGETIDYGPCAFMDVYHPNRVFSSIDRTGRYAYGNQPQIAVWNLAQLATALIQLEDDPESVLEEATEIVHAMPELLEDAWLRRFRAKIGLREVAEGDLELVSDLLGIMAQGQADFTNTFRGLLDGTARDQFLEPEAFDVWESRWKDRLSREADPEALMARSNPVLIPRNHRIEQMIAAAVGGDYASFERLMDALSHPFEAREDYADLRRPPAEDEVVQATFCGT.

Gly86, Gly88, Arg89, Lys109, Asp121, Gly122, Arg172, and Arg179 together coordinate ATP. Residue Asp244 is the Proton acceptor of the active site. 2 residues coordinate Mg(2+): Asn245 and Asp254. Residue Asp254 coordinates ATP.

The protein belongs to the SELO family. Requires Mg(2+) as cofactor. Mn(2+) is required as a cofactor.

It carries out the reaction L-seryl-[protein] + ATP = 3-O-(5'-adenylyl)-L-seryl-[protein] + diphosphate. The enzyme catalyses L-threonyl-[protein] + ATP = 3-O-(5'-adenylyl)-L-threonyl-[protein] + diphosphate. It catalyses the reaction L-tyrosyl-[protein] + ATP = O-(5'-adenylyl)-L-tyrosyl-[protein] + diphosphate. The catalysed reaction is L-histidyl-[protein] + UTP = N(tele)-(5'-uridylyl)-L-histidyl-[protein] + diphosphate. It carries out the reaction L-seryl-[protein] + UTP = O-(5'-uridylyl)-L-seryl-[protein] + diphosphate. The enzyme catalyses L-tyrosyl-[protein] + UTP = O-(5'-uridylyl)-L-tyrosyl-[protein] + diphosphate. Nucleotidyltransferase involved in the post-translational modification of proteins. It can catalyze the addition of adenosine monophosphate (AMP) or uridine monophosphate (UMP) to a protein, resulting in modifications known as AMPylation and UMPylation. The sequence is that of Protein nucleotidyltransferase YdiU from Ruegeria sp. (strain TM1040) (Silicibacter sp.).